The sequence spans 504 residues: Anaerobic nitric oxide reductase transcription regulator NorR (504 aa).

Residue aspartate 57 is modified to 4-aspartylphosphate. In terms of domain architecture, Sigma-54 factor interaction spans 187–416; that stretch reads MIGLSPGMTQ…LEHAIHRAVV (230 aa). ATP-binding positions include 215–222 and 278–287; these read GETGTGKE and ADNGTLFLDE. The H-T-H motif DNA-binding region spans 479-498; it reads WAASARMLETDVANLHRLAK.

It participates in nitrogen metabolism; nitric oxide reduction. In terms of biological role, required for the expression of anaerobic nitric oxide (NO) reductase, acts as a transcriptional activator for at least the norVW operon. Activation also requires sigma-54. The sequence is that of Anaerobic nitric oxide reductase transcription regulator NorR from Escherichia fergusonii (strain ATCC 35469 / DSM 13698 / CCUG 18766 / IAM 14443 / JCM 21226 / LMG 7866 / NBRC 102419 / NCTC 12128 / CDC 0568-73).